Consider the following 255-residue polypeptide: Electron transfer flavoprotein subunit beta (255 aa).

Residue A2 is modified to N-acetylalanine. Residues A9, 39-42 (NPFC), C66, and 123-134 (GKQAIDDDCNQT) each bind AMP. The interval 183 to 205 (ADLRLNEPRYATLPNIMKAKKKK) is recognition loop. K200 carries the post-translational modification N6,N6,N6-trimethyllysine; by ETFBKMT; alternate. K200 is subject to N6-acetyllysine; alternate. Position 200 is an N6-methyllysine; alternate (K200). K203 bears the N6,N6,N6-trimethyllysine; by ETFBKMT mark. K210 is subject to N6-acetyllysine; alternate. K210 carries the N6-succinyllysine; alternate modification. 2 positions are modified to phosphoserine: S223 and S226. K238 is modified (N6-acetyllysine). Residue K248 is modified to N6-acetyllysine; alternate. Position 248 is an N6-succinyllysine; alternate (K248).

It belongs to the ETF beta-subunit/FixA family. As to quaternary structure, heterodimer composed of ETFA and ETFB. Identified in a complex that contains ETFA, ETFB and ETFRF1. Interacts with ACADM. Methylated. Trimethylation at Lys-200 and Lys-203 may negatively regulate the activity in electron transfer from acyl-CoA dehydrogenases.

It localises to the mitochondrion matrix. Its function is as follows. Heterodimeric electron transfer flavoprotein that accepts electrons from several mitochondrial dehydrogenases, including acyl-CoA dehydrogenases, glutaryl-CoA and sarcosine dehydrogenase. It transfers the electrons to the main mitochondrial respiratory chain via ETF-ubiquinone oxidoreductase. Required for normal mitochondrial fatty acid oxidation and normal amino acid metabolism. ETFB binds an AMP molecule that probably has a purely structural role. This is Electron transfer flavoprotein subunit beta from Mus musculus (Mouse).